The sequence spans 375 residues: Peroxisomal targeting signal 2 receptor (375 aa).

WD repeat units lie at residues 58–89, 102–133, 172–203, 218–249, 281–312, and 340–372; these read LTQD…RLFD, EHER…KIWS, KNRN…SLFD, HSGL…RIWD, AHGL…RIWR, and QHSE…FVWN.

The protein belongs to the WD repeat peroxin-7 family. In terms of assembly, interacts with PEX21.

Its subcellular location is the cytoplasm. It localises to the cytosol. The protein resides in the peroxisome matrix. Its function is as follows. Receptor required for the peroxisomal import of proteins containing a C-terminal PTS2-type peroxisomal targeting signal, such as 3-oxoacyl-CoA thiolase. Specifically binds to cargo proteins containing a PTS2 peroxisomal targeting signal in the cytosol. Cargo protein-binding triggers interaction with PEX21 and formation of a ternary complex composed of PEX21 and PEX7 along with PTS2-containing cargo proteins, which is tranlocated into peroxisomes by passing through the PEX13-PEX14 docking complex. The polypeptide is Peroxisomal targeting signal 2 receptor (Saccharomyces cerevisiae (strain ATCC 204508 / S288c) (Baker's yeast)).